Reading from the N-terminus, the 406-residue chain is Succinylornithine transaminase (406 aa).

Lys-252 bears the N6-(pyridoxal phosphate)lysine mark.

This sequence belongs to the class-III pyridoxal-phosphate-dependent aminotransferase family. AstC subfamily. Requires pyridoxal 5'-phosphate as cofactor.

It catalyses the reaction N(2)-succinyl-L-ornithine + 2-oxoglutarate = N-succinyl-L-glutamate 5-semialdehyde + L-glutamate. Its pathway is amino-acid degradation; L-arginine degradation via AST pathway; L-glutamate and succinate from L-arginine: step 3/5. In terms of biological role, catalyzes the transamination of N(2)-succinylornithine and alpha-ketoglutarate into N(2)-succinylglutamate semialdehyde and glutamate. Can also act as an acetylornithine aminotransferase. The sequence is that of Succinylornithine transaminase from Escherichia coli (strain SMS-3-5 / SECEC).